Reading from the N-terminus, the 708-residue chain is Polyribonucleotide nucleotidyltransferase (708 aa).

Mg(2+) contacts are provided by Asp488 and Asp494. A KH domain is found at 555-614 (PRIYTMKIPQKKIAEVIGKGGATIRQLTEETGTTIEIGDDGTIKIAATDGESAANAISRI). One can recognise an S1 motif domain in the interval 624–692 (GTIYEGKVVR…RQGRVRLSIK (69 aa)).

This sequence belongs to the polyribonucleotide nucleotidyltransferase family. Component of the RNA degradosome, which is a multiprotein complex involved in RNA processing and mRNA degradation. Requires Mg(2+) as cofactor.

The protein resides in the cytoplasm. The enzyme catalyses RNA(n+1) + phosphate = RNA(n) + a ribonucleoside 5'-diphosphate. Its function is as follows. Involved in mRNA degradation. Catalyzes the phosphorolysis of single-stranded polyribonucleotides processively in the 3'- to 5'-direction. This is Polyribonucleotide nucleotidyltransferase from Pseudoalteromonas translucida (strain TAC 125).